The sequence spans 335 residues: Beta-ketoacyl-[acyl-carrier-protein] synthase III (335 aa).

Residues Cys116 and His256 contribute to the active site. The ACP-binding stretch occupies residues 257–261 (QANLR). Residue Asn286 is part of the active site.

Belongs to the thiolase-like superfamily. FabH family. In terms of assembly, homodimer.

The protein resides in the cytoplasm. It catalyses the reaction malonyl-[ACP] + acetyl-CoA + H(+) = 3-oxobutanoyl-[ACP] + CO2 + CoA. The protein operates within lipid metabolism; fatty acid biosynthesis. In terms of biological role, catalyzes the condensation reaction of fatty acid synthesis by the addition to an acyl acceptor of two carbons from malonyl-ACP. Catalyzes the first condensation reaction which initiates fatty acid synthesis and may therefore play a role in governing the total rate of fatty acid production. Possesses both acetoacetyl-ACP synthase and acetyl transacylase activities. Its substrate specificity determines the biosynthesis of branched-chain and/or straight-chain of fatty acids. This chain is Beta-ketoacyl-[acyl-carrier-protein] synthase III, found in Porphyromonas gingivalis (strain ATCC BAA-308 / W83).